We begin with the raw amino-acid sequence, 170 residues long: Protein BTG1 (170 aa).

Belongs to the BTG family.

Functionally, anti-proliferative protein. This Gallus gallus (Chicken) protein is Protein BTG1 (BTG1).